The sequence spans 352 residues: Cysteinyl leukotriene receptor 1 (352 aa).

Residues 1–43 (MYLQGTKQTFLENMNGTENLTTSLINNTCHDTIDEFRNQVYST) are Extracellular-facing. N-linked (GlcNAc...) asparagine glycans are attached at residues Asn15, Asn19, and Asn26. Residues 44-64 (MYSVISVVGFFGNSFVLYVLI) traverse the membrane as a helical segment. The Cytoplasmic segment spans residues 65-72 (KTYHEKSA). The helical transmembrane segment at 73–93 (FQVYMINLAIADLLCVCTLPL) threads the bilayer. The Extracellular portion of the chain corresponds to 94-121 (RVVYYVHKGKWLFGDFLCRLTTYALYVN). Cys111 and Cys188 are joined by a disulfide. The chain crosses the membrane as a helical span at residues 122-142 (LYCSIFFMTAMSFFRCVAIVF). The Cytoplasmic segment spans residues 143-156 (PVQNINLVTQKKAR). A helical membrane pass occupies residues 157–177 (FVCIGIWIFVILTSSPFLMYK). Over 178-208 (SYQDEKNNTKCFEPPQNNQAKKYVLILHYVS) the chain is Extracellular. The N-linked (GlcNAc...) asparagine glycan is linked to Asn184. A helical membrane pass occupies residues 209 to 229 (LFFGFIIPFVTIIVCYTMIIL). Residues 230–245 (TLLKNTMKKNMPSRRK) lie on the Cytoplasmic side of the membrane. Residues 246 to 266 (AIGMIIVVTAAFLVSFMPYHI) traverse the membrane as a helical segment. Topologically, residues 267–291 (QRTIHLHLLHSETRPCDSVLRMQKS) are extracellular. The helical transmembrane segment at 292 to 312 (VVITLSLAASNCCFDPLLYFF) threads the bilayer. Over 313–352 (SGGNFRRRLSTFRKHSLSSMTYVPKKKASLPEKGEEICNE) the chain is Cytoplasmic.

It belongs to the G-protein coupled receptor 1 family. In terms of tissue distribution, widely expressed, with higher expression in the lung and skin, intermediate levels in the heart, kidney and stomach and lower levels in several other tissues. Isoform 1 is the most abundant form in all tested tissues.

It is found in the cell membrane. In terms of biological role, receptor for cysteinyl leukotrienes mediating constriction of the microvascular smooth muscle during an inflammatory response. This response is mediated via a G-protein that activates a phosphatidylinositol-calcium second messenger system. The rank order of affinities for the leukotrienes is LTD4 &gt;&gt; LTE4 = LTC4 &gt;&gt; LTB4. This is Cysteinyl leukotriene receptor 1 (Cysltr1) from Mus musculus (Mouse).